Consider the following 353-residue polypeptide: Methylthioribose-1-phosphate isomerase (353 aa).

Substrate-binding positions include 51–53, arginine 94, and glutamine 203; that span reads RGA. Aspartate 244 (proton donor) is an active-site residue. Residue 254–255 participates in substrate binding; the sequence is NK.

The protein belongs to the eIF-2B alpha/beta/delta subunits family. MtnA subfamily.

It catalyses the reaction 5-(methylsulfanyl)-alpha-D-ribose 1-phosphate = 5-(methylsulfanyl)-D-ribulose 1-phosphate. It functions in the pathway amino-acid biosynthesis; L-methionine biosynthesis via salvage pathway; L-methionine from S-methyl-5-thio-alpha-D-ribose 1-phosphate: step 1/6. In terms of biological role, catalyzes the interconversion of methylthioribose-1-phosphate (MTR-1-P) into methylthioribulose-1-phosphate (MTRu-1-P). The protein is Methylthioribose-1-phosphate isomerase of Trichodesmium erythraeum (strain IMS101).